Reading from the N-terminus, the 474-residue chain is L-arabinose isomerase (474 aa).

Mn(2+)-binding residues include glutamate 306, glutamate 331, histidine 348, and histidine 447.

Belongs to the arabinose isomerase family. It depends on Mn(2+) as a cofactor.

It catalyses the reaction beta-L-arabinopyranose = L-ribulose. Its pathway is carbohydrate degradation; L-arabinose degradation via L-ribulose; D-xylulose 5-phosphate from L-arabinose (bacterial route): step 1/3. Functionally, catalyzes the conversion of L-arabinose to L-ribulose. The polypeptide is L-arabinose isomerase (Oceanobacillus iheyensis (strain DSM 14371 / CIP 107618 / JCM 11309 / KCTC 3954 / HTE831)).